Consider the following 190-residue polypeptide: Large ribosomal subunit protein bL17 (190 aa).

Low complexity predominate over residues 135 to 165 (AKAAPAAEEAPAEEAPAAEEAATEEAPAAEE). A disordered region spans residues 135–190 (AKAAPAAEEAPAEEAPAAEEAATEEAPAAEETATEEAAAEEAPAAEEAPAEEKDAK).

The protein belongs to the bacterial ribosomal protein bL17 family. Part of the 50S ribosomal subunit. Contacts protein L32.

The chain is Large ribosomal subunit protein bL17 from Pseudarthrobacter chlorophenolicus (strain ATCC 700700 / DSM 12829 / CIP 107037 / JCM 12360 / KCTC 9906 / NCIMB 13794 / A6) (Arthrobacter chlorophenolicus).